Reading from the N-terminus, the 407-residue chain is Fructose-1,6-bisphosphatase, chloroplastic (407 aa).

The transit peptide at 1-50 directs the protein to the chloroplast; that stretch reads MAAATASSQLIFSKPYSPSRLCPFQLCVFDAKSVLSSSRRKHVNGSGVRC. Residues glutamate 126, glutamate 155, aspartate 176, leucine 178, and aspartate 179 each contribute to the Mg(2+) site. 179-182 provides a ligand contact to substrate; it reads DGSS. Cysteine 203 and cysteine 223 are joined by a disulfide. Asparagine 287, tyrosine 319, tyrosine 337, tyrosine 339, and lysine 349 together coordinate substrate. Mg(2+) is bound at residue glutamate 355.

The protein belongs to the FBPase class 1 family. As to quaternary structure, homotetramer. It depends on Mg(2+) as a cofactor.

Its subcellular location is the plastid. It is found in the chloroplast stroma. It carries out the reaction beta-D-fructose 1,6-bisphosphate + H2O = beta-D-fructose 6-phosphate + phosphate. Its pathway is carbohydrate biosynthesis; Calvin cycle. The protein is Fructose-1,6-bisphosphatase, chloroplastic (FBP) of Pisum sativum (Garden pea).